A 380-amino-acid chain; its full sequence is NF-kappa-B inhibitor-like protein 1 (380 aa).

A disordered region spans residues Met1 to Glu34. Over residues Ala13–Ser28 the composition is skewed to polar residues. 2 ANK repeats span residues Gly64–His93 and His97–Lys133. Disordered stretches follow at residues Lys131–Gln167 and Glu185–Leu293. The residue at position 150 (Ser150) is a Phosphoserine. A compositionally biased stretch (acidic residues) spans Ser150–Ala159. Composition is skewed to basic and acidic residues over residues Arg204–Gly221 and Arg236–Val272.

In terms of assembly, interacts with CACTIN (via N-terminal domain); the interaction occurs in a pro-inflammatory-independent manner.

It localises to the nucleus. Involved in the regulation of innate immune response. Acts as negative regulator of Toll-like receptor and interferon-regulatory factor (IRF) signaling pathways. Contributes to the negative regulation of transcriptional activation of NF-kappa-B target genes in response to endogenous pro-inflammatory stimuli. This chain is NF-kappa-B inhibitor-like protein 1 (NFKBIL1), found in Sus scrofa (Pig).